We begin with the raw amino-acid sequence, 438 residues long: 3-phosphoshikimate 1-carboxyvinyltransferase (438 aa).

3 residues coordinate 3-phosphoshikimate: lysine 26, serine 27, and arginine 31. Lysine 26 is a phosphoenolpyruvate binding site. The phosphoenolpyruvate site is built by glycine 99 and arginine 127. Positions 170, 171, 172, 199, 314, and 343 each coordinate 3-phosphoshikimate. Glutamine 172 is a binding site for phosphoenolpyruvate. Glutamate 314 functions as the Proton acceptor in the catalytic mechanism. The phosphoenolpyruvate site is built by arginine 347, arginine 388, and lysine 413.

Belongs to the EPSP synthase family. In terms of assembly, monomer.

It localises to the cytoplasm. The enzyme catalyses 3-phosphoshikimate + phosphoenolpyruvate = 5-O-(1-carboxyvinyl)-3-phosphoshikimate + phosphate. Its pathway is metabolic intermediate biosynthesis; chorismate biosynthesis; chorismate from D-erythrose 4-phosphate and phosphoenolpyruvate: step 6/7. Catalyzes the transfer of the enolpyruvyl moiety of phosphoenolpyruvate (PEP) to the 5-hydroxyl of shikimate-3-phosphate (S3P) to produce enolpyruvyl shikimate-3-phosphate and inorganic phosphate. The polypeptide is 3-phosphoshikimate 1-carboxyvinyltransferase (Mycobacterium sp. (strain MCS)).